Consider the following 538-residue polypeptide: Phosphoenolpyruvate carboxykinase (ATP) (538 aa).

The substrate site is built by arginine 61, tyrosine 195, and lysine 201. ATP is bound by residues lysine 201, histidine 220, and 236 to 244; that span reads GLSGTGKTT. Mn(2+)-binding residues include lysine 201 and histidine 220. A Mn(2+)-binding site is contributed by aspartate 257. Residues glutamate 285, arginine 323, and threonine 449 each contribute to the ATP site. Arginine 323 serves as a coordination point for substrate.

It belongs to the phosphoenolpyruvate carboxykinase (ATP) family. The cofactor is Mn(2+).

The protein resides in the cytoplasm. The enzyme catalyses oxaloacetate + ATP = phosphoenolpyruvate + ADP + CO2. It functions in the pathway carbohydrate biosynthesis; gluconeogenesis. In terms of biological role, involved in the gluconeogenesis. Catalyzes the conversion of oxaloacetate (OAA) to phosphoenolpyruvate (PEP) through direct phosphoryl transfer between the nucleoside triphosphate and OAA. The polypeptide is Phosphoenolpyruvate carboxykinase (ATP) (Nitrobacter winogradskyi (strain ATCC 25391 / DSM 10237 / CIP 104748 / NCIMB 11846 / Nb-255)).